A 473-amino-acid polypeptide reads, in one-letter code: MKTLYSLRRFYHVETLFNGTLALAGRDQETTGFAWWAGNARLINLSGKLLGAHVAHAGLIVFWAGAMNLFEVAHFVPEKPMYEQGLILLPHLATLGWGVGPGGEVIDTFPYFVSGVLHLISSAVLGFGGIYHALLGPETLEESFPFFGYVWKDRNKMTTILGIHLILLGIGAFLLVFKALYFGGVYDTWAPGGGDVRKITNLTLSPSIIFGYLLKSPFGGEGWIVSVDDLEDIIGGHVWLGSICILGGIWHILTKPFAWARRALVWSGEAYLSYSLGALAVFGFIACCFVWFNNTAYPSEFYGPTGPEASQAQAFTFLVRDQRLGANVGSAQGPTGLGKYLMRSPTGEVIFGGETMRFWDLRAPWLEPLRGPNGLDLSRLKKDIQPWQERRSAEYMTHAPLGSLNSVGGVATEINAVNYVSPRSWLATSHFVLGFFFFVGHLWHAGRARAAAAGFEKGIDRDFEPVLFMTPLN.

A propeptide spanning residues 1–14 (MKTLYSLRRFYHVE) is cleaved from the precursor. Residue threonine 15 is modified to N-acetylthreonine. At threonine 15 the chain carries Phosphothreonine. 5 helical membrane passes run 69-93 (LFEV…PHLA), 134-155 (LLGP…KDRN), 178-200 (KALY…RKIT), 255-275 (KPFA…LSYS), and 291-312 (WFNN…ASQA). Residue glutamate 367 coordinates [CaMn4O5] cluster. The helical transmembrane segment at 447–471 (RARAAAAGFEKGIDRDFEPVLFMTP) threads the bilayer.

Belongs to the PsbB/PsbC family. PsbC subfamily. In terms of assembly, PSII is composed of 1 copy each of membrane proteins PsbA, PsbB, PsbC, PsbD, PsbE, PsbF, PsbH, PsbI, PsbJ, PsbK, PsbL, PsbM, PsbT, PsbX, PsbY, PsbZ, Psb30/Ycf12, at least 3 peripheral proteins of the oxygen-evolving complex and a large number of cofactors. It forms dimeric complexes. The cofactor is Binds multiple chlorophylls and provides some of the ligands for the Ca-4Mn-5O cluster of the oxygen-evolving complex. It may also provide a ligand for a Cl- that is required for oxygen evolution. PSII binds additional chlorophylls, carotenoids and specific lipids..

The protein resides in the plastid. It localises to the chloroplast thylakoid membrane. Functionally, one of the components of the core complex of photosystem II (PSII). It binds chlorophyll and helps catalyze the primary light-induced photochemical processes of PSII. PSII is a light-driven water:plastoquinone oxidoreductase, using light energy to abstract electrons from H(2)O, generating O(2) and a proton gradient subsequently used for ATP formation. In Solanum tuberosum (Potato), this protein is Photosystem II CP43 reaction center protein.